A 1193-amino-acid chain; its full sequence is DNA-directed RNA polymerase subunit beta (1193 aa).

Over residues 1149–1162 (EEEIEMRDLEDEED) the composition is skewed to acidic residues. Residues 1149-1193 (EEEIEMRDLEDEEDAKQADGLALSGDEEPEETASADVERDVVTKE) are disordered. Over residues 1184 to 1193 (DVERDVVTKE) the composition is skewed to basic and acidic residues.

It belongs to the RNA polymerase beta chain family. In terms of assembly, RNAP is composed of a core of 2 alpha, a beta and a beta' subunit. The core is associated with a delta subunit, and at least one of epsilon or omega. When a sigma factor is associated with the core the holoenzyme is formed, which can initiate transcription.

It carries out the reaction RNA(n) + a ribonucleoside 5'-triphosphate = RNA(n+1) + diphosphate. Functionally, DNA-dependent RNA polymerase catalyzes the transcription of DNA into RNA using the four ribonucleoside triphosphates as substrates. This is DNA-directed RNA polymerase subunit beta from Bacillus subtilis (strain 168).